A 255-amino-acid polypeptide reads, in one-letter code: 3-deoxy-manno-octulosonate cytidylyltransferase (255 aa).

This sequence belongs to the KdsB family.

It localises to the cytoplasm. It catalyses the reaction 3-deoxy-alpha-D-manno-oct-2-ulosonate + CTP = CMP-3-deoxy-beta-D-manno-octulosonate + diphosphate. It participates in nucleotide-sugar biosynthesis; CMP-3-deoxy-D-manno-octulosonate biosynthesis; CMP-3-deoxy-D-manno-octulosonate from 3-deoxy-D-manno-octulosonate and CTP: step 1/1. It functions in the pathway bacterial outer membrane biogenesis; lipopolysaccharide biosynthesis. Activates KDO (a required 8-carbon sugar) for incorporation into bacterial lipopolysaccharide in Gram-negative bacteria. This is 3-deoxy-manno-octulosonate cytidylyltransferase from Hahella chejuensis (strain KCTC 2396).